The chain runs to 152 residues: Ribosome maturation factor RimP (152 aa).

It belongs to the RimP family.

The protein localises to the cytoplasm. Functionally, required for maturation of 30S ribosomal subunits. The sequence is that of Ribosome maturation factor RimP from Escherichia coli (strain K12 / MC4100 / BW2952).